Reading from the N-terminus, the 135-residue chain is Class I hydrophobin dewB (135 aa).

A signal peptide spans 1 to 17 (MKFIGLATLSLFALASA). 4 disulfides stabilise this stretch: C35–C109, C43–C103, C44–C84, and C110–C128.

This sequence belongs to the fungal hydrophobin family. As to quaternary structure, self-assembles to form functional amyloid fibrils called rodlets. Self-assembly into fibrillar rodlets occurs spontaneously at hydrophobic:hydrophilic interfaces and the rodlets further associate laterally to form amphipathic monolayers.

The protein localises to the secreted. The protein resides in the spore wall. Aerial growth, conidiation, and dispersal of filamentous fungi in the environment rely upon a capability of their secreting small amphipathic proteins called hydrophobins (HPBs) with low sequence identity. Class I can self-assemble into an outermost layer of rodlet bundles on aerial cell surfaces, conferring cellular hydrophobicity that supports fungal growth, development and dispersal; whereas Class II form highly ordered films at water-air interfaces through intermolecular interactions but contribute nothing to the rodlet structure. DewB is a class I hydrophobin that contributes to the hydrophobicity of the spore surface. The polypeptide is Class I hydrophobin dewB (Emericella nidulans (strain FGSC A4 / ATCC 38163 / CBS 112.46 / NRRL 194 / M139) (Aspergillus nidulans)).